Reading from the N-terminus, the 442-residue chain is Aspartate--tRNA(Asp/Asn) ligase (442 aa).

An L-aspartate-binding site is contributed by E172. Positions Q194–K197 are aspartate. Position 216 (R216) interacts with L-aspartate. Residues R216 to E218, R224 to L226, and E365 each bind ATP. Residues E365 and T368 each contribute to the Mg(2+) site. Residues T368 and R372 each coordinate L-aspartate. G413–R416 is a binding site for ATP.

Belongs to the class-II aminoacyl-tRNA synthetase family. Type 2 subfamily. Homodimer. Mg(2+) is required as a cofactor.

Its subcellular location is the cytoplasm. It carries out the reaction tRNA(Asx) + L-aspartate + ATP = L-aspartyl-tRNA(Asx) + AMP + diphosphate. Functionally, aspartyl-tRNA synthetase with relaxed tRNA specificity since it is able to aspartylate not only its cognate tRNA(Asp) but also tRNA(Asn). Reaction proceeds in two steps: L-aspartate is first activated by ATP to form Asp-AMP and then transferred to the acceptor end of tRNA(Asp/Asn). The polypeptide is Aspartate--tRNA(Asp/Asn) ligase (aspS) (Aeropyrum pernix (strain ATCC 700893 / DSM 11879 / JCM 9820 / NBRC 100138 / K1)).